The sequence spans 341 residues: Homeobox protein mls-2 (341 aa).

2 disordered regions span residues 1–78 and 139–209; these read MPTS…DSTN and SNPD…TVFS. The span at 64–78 shows a compositional bias: polar residues; that stretch reads TTQSSPSASSEDSTN. Basic and acidic residues predominate over residues 153–166; sequence KDEKSEGKDGETRD. The homeobox DNA-binding region spans 201–260; the sequence is KKKTRTVFSRSQVSQLEMMFECKRYLSSQERSNLAQKLHLTETQVKIWFQNRRNKFKRQA.

It belongs to the HMX homeobox family. In terms of tissue distribution, expressed in a subset of head neurons, including AIM and ASK (at protein level).

Its subcellular location is the nucleus. Its function is as follows. Transcription factor that binds to the promoter of target genes. Regulates fate specification and/or differentiation of multiple cell types arising from the embryonic mesodermal (M) lineage and the ABp(l/r)paa precursors. In the postembryonic M lineage, regulates cleavage orientation, cell proliferation and cell fate specification. Regulates hlh-1 expression to specify coelomocyte fate in the mesodermal (M) lineage. In AWC neurons, initiates expression of ceh-36, leading to the expression of terminal differentiation genes. Regulates ventral cephalic sheath (CEPsh) glia differentiation and expression of transcription factor hlh-17 in CEPsh glia. Promotes terminal differentiation and morphogenesis of the epithelial duct and pore cells. In the duct cell, cooperates with the EGF-Ras-ERK pathway in turning on the terminal differentiation gene lin-48. The chain is Homeobox protein mls-2 from Caenorhabditis elegans.